A 131-amino-acid chain; its full sequence is uncharacterized protein (131 aa).

This is an uncharacterized protein from Aquifex aeolicus (strain VF5).